The sequence spans 380 residues: MGIKGLTKLLADNAPKAMKEQKFESYFGRRIAVDASMSIYQFLIVVGRTGMETLTNEAGEVTSHLQGMFNRTIRLLEAGIKPVYVFDGKPPDLKKQELAKRYSKREDATKELTEAVEEGDKDAIEKFSKRTVKVTKQHNEECKRLLRLMGVPVVEAPCEAEAECAALCINDMVYAVASEDMDSLTFGAPRFLRHLMDPSSKKIPVMEFEVAKVLEELELTMDQFIDLCILSGCDYCDSIKGIGGQTALKLIRQHGSIESILENINKDRYQIPEDWPYQEARRLFKEPNVTLDIPELKWNAPDEEGLVEFLVKENGFNQDRVTKAIEKIKFAKNKSSQGRLESFFKPVVSTSVPLKRKDTSEKPTKAVANKKTKGAGGKKK.

Residues 1–105 (MGIKGLTKLL…QELAKRYSKR (105 aa)) are N-domain. Aspartate 34 is a binding site for Mg(2+). Position 71 (arginine 71) interacts with DNA. Positions 87, 159, 161, 180, and 182 each coordinate Mg(2+). The tract at residues 123–254 (AIEKFSKRTV…QTALKLIRQH (132 aa)) is I-domain. DNA is bound at residue glutamate 159. The DNA site is built by glycine 232 and aspartate 234. Aspartate 234 is a Mg(2+) binding site. The interval 336 to 344 (SQGRLESFF) is interaction with PCNA. The segment at 351 to 380 (SVPLKRKDTSEKPTKAVANKKTKGAGGKKK) is disordered. Positions 355–364 (KRKDTSEKPT) are enriched in basic and acidic residues. Over residues 368-380 (ANKKTKGAGGKKK) the composition is skewed to basic residues.

Belongs to the XPG/RAD2 endonuclease family. FEN1 subfamily. In terms of assembly, interacts with PCNA. Three molecules of FEN1 bind to one PCNA trimer with each molecule binding to one PCNA monomer. PCNA stimulates the nuclease activity without altering cleavage specificity. Requires Mg(2+) as cofactor. In terms of processing, phosphorylated. Phosphorylation upon DNA damage induces relocalization to the nuclear plasma. In terms of tissue distribution, strongly expressed in proliferating tissues: root and shoot apical meristem, tiller bud, leaf, ligule primordia, marginal meristem of young leaves and panicles. Not expressed in mature leaves when exposed to UV.

It localises to the nucleus. Its subcellular location is the nucleolus. It is found in the nucleoplasm. The protein resides in the mitochondrion. Inhibited by NaCl. Functionally, structure-specific nuclease with 5'-flap endonuclease and 5'-3' exonuclease activities involved in DNA replication and repair. During DNA replication, cleaves the 5'-overhanging flap structure that is generated by displacement synthesis when DNA polymerase encounters the 5'-end of a downstream Okazaki fragment. It enters the flap from the 5'-end and then tracks to cleave the flap base, leaving a nick for ligation. Also involved in the long patch base excision repair (LP-BER) pathway, by cleaving within the apurinic/apyrimidinic (AP) site-terminated flap. Acts as a genome stabilization factor that prevents flaps from equilibrating into structures that lead to duplications and deletions. Also possesses 5'-3' exonuclease activity on nicked or gapped double-stranded DNA, and exhibits RNase H activity. Also involved in replication and repair of rDNA and in repairing mitochondrial DNA. May be required for cell proliferation. This is Flap endonuclease 1-A from Oryza sativa subsp. japonica (Rice).